A 1162-amino-acid polypeptide reads, in one-letter code: MSEPDDVDTVKERLAEDRQNIHIQNEYQDISYTIIKARIGMLATAIGGPDHSVDSVNPPYKVGDDCLACIKDLIRWFKLVDDNQKRWDVEMATAEFKILQNDLIPILLDWEAKNSAATRKSKKTGEDISIFFPNKSYHDRIALGALQLMVLMTWPLIITDQSSYNQVNYYFELKKHQLLYKHAILTTENGKVLKAAIRLALNVMSVDVDHRTARDDSLIRMVLNFLKNVVAIEPGEVTISSVKRLKRPLTMAEMLPTNITVDDISINSVITAFDKNKVFGFLLTVASSLSDAVDPNFVSWPLLEVMFFLTKDINPIRLFKNQRKSYKLGTDHEITDSNMTTSGKHLSELLAKEHEKKLNVIKNTSSRHSRFGGLLSIQTPQNTRLTIASNSVNMRDDAALQELDSRKKWNKTITMRLDVIEGLSSSFFSTEGNSIYMSSDNITSIKEFLADFVDSSFNLLLQNATDSFTSEIQDQLPLHKIEYMLFISWFVKFQRSRCIYEIDATPDYVSGALLDECYILFTKYLRESYEQKNWPVVHAGMLLFTEYLEFLLSLDQSWEADVQAVISKILSENMLQLLASLPKSATSHSSQYVKACINLTHVVLKTIDKFDENSSLTVESKRKRKVNLNHTAIEKYAKDNDLDYESAFDILEEQFKQVTINFDKVFRGYLTEPTISTYIRYLQSYKELEDKDLIRVLKFFQRVFVKAKEELFLFRIDFMILCREILSQQGLPTTSELRTHFTKFNEYYLKQLKNKLKKMPSLYINILFPMLHDSQISYYMRHGKMKLTEGTPDIVLPSTFINIPDEGSLPKKVLLDMQVGILVSSLIDDGYEDLIEALLLNLQSSFDGLKGKVAEGINSLEEERVKKVAFNATNSEIKRALYQQPEFRRLLILAGFAIPEANQPACYFINNKTPTEVQLVIETIQKHRSLPFESEIGKPASYYLSSHYQEYEDPEEYGSDLNNGSYFEDLEIMDKRTEGRELSKGKAQSKLVQRSKGKRKAIAHHPEENESDFEANASSSTKLPVVSKEYIMDSDDEDPDFGAIFFENETYLRQLLDKHNGSLTETQFSLFAQFCEERVKNNGQLRNDYSALFNETPKSPIFSDVDAETIIIGSASLPSLANEPIETQVVSSEEYSSHPLEEEVTSEQRKRKKPRIESDTEY.

Disordered regions lie at residues 977–1017 (TEGR…EANA) and 1127–1162 (TQVV…DTEY). The segment covering 993-1003 (QRSKGKRKAIA) has biased composition (basic residues).

The protein belongs to the timeless family. As to quaternary structure, component of the fork protection complex (FPC) consisting of TOF1 and CSM3.

It is found in the nucleus. Forms a fork protection complex (FPC) with CSM3 and which is required for chromosome segregation during meiosis and DNA damage repair. FPC coordinates leading and lagging strand synthesis and moves with the replication fork. FPC stabilizes replication forks in a configuration that is recognized by replication checkpoint sensors. This Kluyveromyces lactis (strain ATCC 8585 / CBS 2359 / DSM 70799 / NBRC 1267 / NRRL Y-1140 / WM37) (Yeast) protein is Topoisomerase 1-associated factor 1 (TOF1).